We begin with the raw amino-acid sequence, 91 residues long: DNA-directed RNA polymerase subunit Rpo11 (91 aa).

This sequence belongs to the archaeal Rpo11/eukaryotic RPB11/RPC19 RNA polymerase subunit family. In terms of assembly, part of the RNA polymerase complex.

It localises to the cytoplasm. The enzyme catalyses RNA(n) + a ribonucleoside 5'-triphosphate = RNA(n+1) + diphosphate. Its function is as follows. DNA-dependent RNA polymerase (RNAP) catalyzes the transcription of DNA into RNA using the four ribonucleoside triphosphates as substrates. This is DNA-directed RNA polymerase subunit Rpo11 from Methanothrix thermoacetophila (strain DSM 6194 / JCM 14653 / NBRC 101360 / PT) (Methanosaeta thermophila).